Reading from the N-terminus, the 293-residue chain is Large ribosomal subunit protein uL18 (293 aa).

Residues 247–263 show a composition bias toward basic and acidic residues; the sequence is IRANPAHEKKQPRDGLV. The disordered stretch occupies residues 247–283; it reads IRANPAHEKKQPRDGLVKKRWNRAKMSLKQKRDRVKQ. Residues 264–283 show a composition bias toward basic residues; it reads KKRWNRAKMSLKQKRDRVKQ.

The protein belongs to the universal ribosomal protein uL18 family. Component of the large ribosomal subunit (LSU).

Its subcellular location is the cytoplasm. The protein localises to the nucleus. Component of the ribosome, a large ribonucleoprotein complex responsible for the synthesis of proteins in the cell. The small ribosomal subunit (SSU) binds messenger RNAs (mRNAs) and translates the encoded message by selecting cognate aminoacyl-transfer RNA (tRNA) molecules. The large subunit (LSU) contains the ribosomal catalytic site termed the peptidyl transferase center (PTC), which catalyzes the formation of peptide bonds, thereby polymerizing the amino acids delivered by tRNAs into a polypeptide chain. The nascent polypeptides leave the ribosome through a tunnel in the LSU and interact with protein factors that function in enzymatic processing, targeting, and the membrane insertion of nascent chains at the exit of the ribosomal tunnel. The sequence is that of Large ribosomal subunit protein uL18 (RPL5) from Suberites domuncula (Sponge).